Consider the following 111-residue polypeptide: uncharacterized protein (111 aa).

Residues 20-39 (PVDTTGLIFFAVFASSFVLY) traverse the membrane as a helical segment.

It is found in the membrane. This is an uncharacterized protein from Saccharomyces cerevisiae (strain ATCC 204508 / S288c) (Baker's yeast).